Here is a 650-residue protein sequence, read N- to C-terminus: Epithelial sodium channel subunit gamma (650 aa).

Over 1–55 the chain is Cytoplasmic; that stretch reads MAPGEKIKAKIKKNLPVRGPQAPTIKDLMHWYCMNTNTHGCRRIVVSRGRLRRLL. The helical transmembrane segment at 56-76 threads the bilayer; it reads WIAFTLTAVALIIWQCALLVF. The Extracellular segment spans residues 77 to 542; it reads SFYTVSVSIK…GGQLGLWMSC (466 aa). 8 cysteine pairs are disulfide-bonded: cysteine 100–cysteine 284, cysteine 208–cysteine 215, cysteine 261–cysteine 268, cysteine 373–cysteine 458, cysteine 395–cysteine 454, cysteine 399–cysteine 450, cysteine 408–cysteine 435, and cysteine 410–cysteine 424. A gating release of inhibition by proteolysis (GRIP); protease-sensitive region that is responsible for the proteolytic activation of the channel region spans residues 135–222; the sequence is RKRREAGSMP…SDCATYTFSS (88 aa). Asparagine 210 is a glycosylation site (N-linked (GlcNAc...) asparagine). The N-linked (GlcNAc...) asparagine glycan is linked to asparagine 272. Asparagine 498 is a glycosylation site (N-linked (GlcNAc...) asparagine). Residues 543–563 form a helical membrane-spanning segment; it reads SVVCVIEIIEVFFIDFFSIIA. The Cytoplasmic segment spans residues 564-650; the sequence is RRQWHKAKDW…LTDTQLTNEL (87 aa). A disordered region spans residues 577-628; it reads RQTPPSTETPSSRQGQDNPALDTDDDLPTFTSAMRLPPAPGSTVPGTPPPRY. Residues 579-593 show a composition bias toward polar residues; it reads TPPSTETPSSRQGQD. The PY motif; mediates interaction, ubiquitination and inhibition by NEDD4 and NEDD4L motif lies at 624-628; sequence PPPRY. The short motif at 624–628 is the PY motif; recruits WW domain-containing proteins and is thereby required for ubiquitination and inhibition of the channel by NEDD4 and NEDD4L element; it reads PPPRY.

It belongs to the amiloride-sensitive sodium channel (TC 1.A.6) family. SCNN1G subfamily. Component of the heterotrimeric epithelial sodium channel (ENaC) composed of an alpha/SCNN1A, a beta/SCNN1B and a gamma/SCNN1G subunit. Interacts with WWP1 (via WW domains). Interacts with WWP2 (via WW domains); inhibits the channel. Interacts with the full-length immature form of PCSK9 (pro-PCSK9); inhibits ENaC by promoting its proteasomal degradation. Interacts with BPIFA1; the interaction is indirect via SCNN1B and inhibits the proteolytic maturation of SCNN1A and SCNN1G and the activation of ENaC. Post-translationally, phosphorylated on serine and threonine residues. Aldosterone and insulin increase the basal level of phosphorylation. In terms of processing, ubiquitinated. Can be ubiquitinated at multiple sites and undergo monoubiquitination and polyubiquitination. Ubiquitination by NEDD4 or NEDD4L inhibits the ENaC channel through endocytosis, intracellular retention and degradation of its individual subunits. ENaC is activated through the proteolytic maturation of its subunits. Furin cleaves the SCNN1G subunit first, followed by cleavage by prostasin (PRSS8), which results in a stepwise increase in the open probability of the channel due to the release of an inhibitory tract. BPIFA1, which is recruited by the SCNN1B subunit, prevents the proteolytic activation of ENaC. Post-translationally, N-glycosylated. N-linked glycans are processed to complex type during ENaC complex assembly and transport to the plasma membrane.

Its subcellular location is the apical cell membrane. The catalysed reaction is Na(+)(in) = Na(+)(out). Originally identified and characterized by its inhibition by the diuretic drug amiloride. Its function is as follows. This is one of the three pore-forming subunits of the heterotrimeric epithelial sodium channel (ENaC), a critical regulator of sodium balance and fluid homeostasis. ENaC operates in epithelial tissues, where it mediates the electrodiffusion of sodium ions from extracellular fluid through the apical membrane of cells, with water following osmotically. It plays a key role in maintaining sodium homeostasis through electrogenic sodium reabsorption in the kidneys. Additionally, ENaC is essential for airway surface liquid homeostasis, which is crucial for proper mucus clearance. The sequence is that of Epithelial sodium channel subunit gamma from Rattus norvegicus (Rat).